Reading from the N-terminus, the 260-residue chain is Phosphate import ATP-binding protein PstB 1 (260 aa).

The region spanning 8–255 (TETKNVYDVL…PEHKRTEDYV (248 aa)) is the ABC transporter domain. 46–53 (GPSGCGKS) serves as a coordination point for ATP.

This sequence belongs to the ABC transporter superfamily. Phosphate importer (TC 3.A.1.7) family. The complex is composed of two ATP-binding proteins (PstB), two transmembrane proteins (PstC and PstA) and a solute-binding protein (PstS).

Its subcellular location is the cell membrane. It catalyses the reaction phosphate(out) + ATP + H2O = ADP + 2 phosphate(in) + H(+). Functionally, part of the ABC transporter complex PstSACB involved in phosphate import. Responsible for energy coupling to the transport system. The protein is Phosphate import ATP-binding protein PstB 1 of Shouchella clausii (strain KSM-K16) (Alkalihalobacillus clausii).